Here is a 378-residue protein sequence, read N- to C-terminus: Ribosomal RNA large subunit methyltransferase G (378 aa).

Belongs to the methyltransferase superfamily. RlmG family.

It localises to the cytoplasm. The enzyme catalyses guanosine(1835) in 23S rRNA + S-adenosyl-L-methionine = N(2)-methylguanosine(1835) in 23S rRNA + S-adenosyl-L-homocysteine + H(+). In terms of biological role, specifically methylates the guanine in position 1835 (m2G1835) of 23S rRNA. This Shigella flexneri serotype 5b (strain 8401) protein is Ribosomal RNA large subunit methyltransferase G.